Reading from the N-terminus, the 417-residue chain is Serine/threonine-protein kinase PkaB (417 aa).

A Protein kinase domain is found at 9 to 270; sequence YTAHQILGRG…ELSARLRELL (262 aa). Residues 15-23 and K36 contribute to the ATP site; that span reads LGRGSAGTV. Residue D130 is the Proton acceptor of the active site. 2 disordered regions span residues 279-371 and 395-417; these read LDVD…RAAT and LATGGDEDGGGPQDTRNSAPAAP. Residues 280–293 show a composition bias toward acidic residues; sequence DVDEPDAEQPEDAP. Low complexity-rich tracts occupy residues 294–308 and 349–368; these read DASAASPAAPVSTAE and GTARAPRASGAPRPGSARNR. Polar residues predominate over residues 408 to 417; the sequence is DTRNSAPAAP.

It belongs to the protein kinase superfamily. Ser/Thr protein kinase family. In terms of processing, autophosphorylated mainly at Thr.

It catalyses the reaction L-seryl-[protein] + ATP = O-phospho-L-seryl-[protein] + ADP + H(+). The catalysed reaction is L-threonyl-[protein] + ATP = O-phospho-L-threonyl-[protein] + ADP + H(+). The protein is Serine/threonine-protein kinase PkaB (pkaB) of Streptomyces coelicolor (strain ATCC BAA-471 / A3(2) / M145).